Consider the following 254-residue polypeptide: Flagellar L-ring protein 1 (254 aa).

The signal sequence occupies residues methionine 1 to alanine 26.

This sequence belongs to the FlgH family. In terms of assembly, the basal body constitutes a major portion of the flagellar organelle and consists of four rings (L,P,S, and M) mounted on a central rod.

It localises to the cell outer membrane. It is found in the bacterial flagellum basal body. Functionally, assembles around the rod to form the L-ring and probably protects the motor/basal body from shearing forces during rotation. This chain is Flagellar L-ring protein 1 (flgH1), found in Bradyrhizobium diazoefficiens (strain JCM 10833 / BCRC 13528 / IAM 13628 / NBRC 14792 / USDA 110).